A 297-amino-acid polypeptide reads, in one-letter code: HTH-type transcriptional regulator ArgP (297 aa).

Residues 4–60 enclose the HTH lysR-type domain; sequence PDYRTLQALDAVIRERGFERAAQKLCITQSAVSQRIKQLENMFGQPLLVRTVPPRPT. The segment at residues 21 to 40 is a DNA-binding region (H-T-H motif); the sequence is FERAAQKLCITQSAVSQRIK.

Belongs to the LysR transcriptional regulatory family. As to quaternary structure, homodimer.

Controls the transcription of genes involved in arginine and lysine metabolism. This Escherichia coli O127:H6 (strain E2348/69 / EPEC) protein is HTH-type transcriptional regulator ArgP.